Reading from the N-terminus, the 122-residue chain is Ribosomal protein eL22-like 1 (122 aa).

Ser112, Ser118, and Ser120 each carry phosphoserine.

Belongs to the eukaryotic ribosomal protein eL22 family.

The sequence is that of Ribosomal protein eL22-like 1 (Rpl22l1) from Mus musculus (Mouse).